We begin with the raw amino-acid sequence, 346 residues long: uncharacterized protein (346 aa).

Residues 16–36 form a helical membrane-spanning segment; the sequence is ILGIIICIILIVGFFISFDST.

The protein resides in the membrane. This is an uncharacterized protein from Methanocaldococcus jannaschii (strain ATCC 43067 / DSM 2661 / JAL-1 / JCM 10045 / NBRC 100440) (Methanococcus jannaschii).